Reading from the N-terminus, the 296-residue chain is GTPase Era (296 aa).

The Era-type G domain maps to 7–173; sequence KAGFVSIIGR…VDLVREHLPE (167 aa). The segment at 15 to 22 is G1; the sequence is GRPNVGKS. 15–22 is a binding site for GTP; sequence GRPNVGKS. The G2 stretch occupies residues 41 to 45; sequence QTTRN. Residues 62 to 65 are G3; the sequence is DTPG. GTP contacts are provided by residues 62–66 and 122–125; these read DTPGI and NKID. Positions 122 to 125 are G4; it reads NKID. Residues 152–154 form a G5 region; it reads ISA. Residues 204 to 281 form the KH type-2 domain; the sequence is TNREVPYGTA…YLELFVQVQE (78 aa).

The protein belongs to the TRAFAC class TrmE-Era-EngA-EngB-Septin-like GTPase superfamily. Era GTPase family. In terms of assembly, monomer.

It localises to the cytoplasm. Its subcellular location is the cell inner membrane. An essential GTPase that binds both GDP and GTP, with rapid nucleotide exchange. Plays a role in 16S rRNA processing and 30S ribosomal subunit biogenesis and possibly also in cell cycle regulation and energy metabolism. In Trichlorobacter lovleyi (strain ATCC BAA-1151 / DSM 17278 / SZ) (Geobacter lovleyi), this protein is GTPase Era.